A 155-amino-acid chain; its full sequence is uncharacterized protein (155 aa).

Residues 6–155 (TCVRNARLAD…CDEIAMVKTL (150 aa)) form the N-acetyltransferase domain.

It belongs to the acetyltransferase family.

This is an uncharacterized protein from Chlorobaculum tepidum (strain ATCC 49652 / DSM 12025 / NBRC 103806 / TLS) (Chlorobium tepidum).